Here is a 276-residue protein sequence, read N- to C-terminus: Large ribosomal subunit protein uL2c (276 aa).

The tract at residues 225–256 is disordered; sequence NPVDHPHGGGEGRSPIGRPKPVSPWGKTALGA.

Belongs to the universal ribosomal protein uL2 family. As to quaternary structure, part of the 50S ribosomal subunit.

The protein resides in the plastid. Its subcellular location is the chloroplast. This chain is Large ribosomal subunit protein uL2c (rpl2), found in Mesostigma viride (Green alga).